Consider the following 327-residue polypeptide: Interleukin-12 subunit beta (327 aa).

The N-terminal stretch at 1–22 (MCHQKLTISWFAVVLLASPLMA) is a signal peptide. Residues 23–106 (IWELEKDVYV…LSHSRLLLHK (84 aa)) enclose the Ig-like C2-type domain. Cysteines 50 and 90 form a disulfide. Asn125, Asn135, Asn223, and Asn315 each carry an N-linked (GlcNAc...) asparagine glycan. The region spanning 238–327 (PPKNLQLKPL…WSRWVSVPCS (90 aa)) is the Fibronectin type-III domain.

This sequence belongs to the IL-12B family. In terms of assembly, heterodimer with IL12A; disulfide-linked. The heterodimer is known as interleukin IL-12. Heterodimer with IL23A; disulfide-linked. The heterodimer is known as interleukin IL-23. Also secreted as a monomer. Interacts with NBR1; this interaction promotes IL-12 secretion.

The protein resides in the secreted. Its function is as follows. Cytokine that can act as a growth factor for activated T and NK cells, enhance the lytic activity of NK/lymphokine-activated killer cells, and stimulate the production of IFN-gamma by resting PBMC. Functionally, associates with IL23A to form the IL-23 interleukin, a heterodimeric cytokine which functions in innate and adaptive immunity. IL-23 may constitute with IL-17 an acute response to infection in peripheral tissues. IL-23 binds to a heterodimeric receptor complex composed of IL12RB1 and IL23R, activates the Jak-Stat signaling cascade, stimulates memory rather than naive T-cells and promotes production of pro-inflammatory cytokines. IL-23 induces autoimmune inflammation and thus may be responsible for autoimmune inflammatory diseases and may be important for tumorigenesis. The chain is Interleukin-12 subunit beta (IL12B) from Mesocricetus auratus (Golden hamster).